A 1220-amino-acid chain; its full sequence is Diacylglycerol kinase delta (1220 aa).

The segment at methionine 1–glycine 47 is disordered. The segment at methionine 1 to lysine 52 is regulates association with membranes. Positions alanine 7 to glutamate 22 are enriched in pro residues. Positions threonine 53–asparagine 146 constitute a PH domain. 2 consecutive Phorbol-ester/DAG-type zinc fingers follow at residues methionine 163 to cysteine 213 and proline 235 to cysteine 286. In terms of domain architecture, DAGKc spans serine 317–tyrosine 451. The segment at aspartate 554–cysteine 584 is disordered. Positions tryptophan 1151–serine 1214 constitute an SAM domain.

The protein belongs to the eukaryotic diacylglycerol kinase family. As to quaternary structure, homooligomer. Monomer. Interacts with AP2A2; regulates clathrin-dependent endocytosis. In terms of tissue distribution, widely expressed.

The protein localises to the cell membrane. The protein resides in the membrane. Its subcellular location is the clathrin-coated pit. It is found in the cytoplasm. The catalysed reaction is a 1,2-diacyl-sn-glycerol + ATP = a 1,2-diacyl-sn-glycero-3-phosphate + ADP + H(+). The enzyme catalyses 1,2-di-(9Z-octadecenoyl)-sn-glycerol + ATP = 1,2-di-(9Z-octadecenoyl)-sn-glycero-3-phosphate + ADP + H(+). It catalyses the reaction 1-octadecanoyl-2-(5Z,8Z,11Z,14Z-eicosatetraenoyl)-sn-glycerol + ATP = 1-octadecanoyl-2-(5Z,8Z,11Z,14Z-eicosatetraenoyl)-sn-glycero-3-phosphate + ADP + H(+). It participates in lipid metabolism; glycerolipid metabolism. Functionally, diacylglycerol kinase that converts diacylglycerol/DAG into phosphatidic acid/phosphatidate/PA and regulates the respective levels of these two bioactive lipids. Thereby, acts as a central switch between the signaling pathways activated by these second messengers with different cellular targets and opposite effects in numerous biological processes. By controlling the levels of diacylglycerol, regulates for instance the PKC and EGF receptor signaling pathways and plays a crucial role during development. May also regulate clathrin-dependent endocytosis. The sequence is that of Diacylglycerol kinase delta from Mus musculus (Mouse).